Consider the following 211-residue polypeptide: Potassium-transporting ATPase KdpC subunit (211 aa).

Residues 13–35 (VVTMVLTGLLYPLAVTGLAQLLF) form a helical membrane-spanning segment.

Belongs to the KdpC family. In terms of assembly, the system is composed of three essential subunits: KdpA, KdpB and KdpC.

The protein localises to the cell inner membrane. Its function is as follows. Part of the high-affinity ATP-driven potassium transport (or Kdp) system, which catalyzes the hydrolysis of ATP coupled with the electrogenic transport of potassium into the cytoplasm. This subunit acts as a catalytic chaperone that increases the ATP-binding affinity of the ATP-hydrolyzing subunit KdpB by the formation of a transient KdpB/KdpC/ATP ternary complex. The polypeptide is Potassium-transporting ATPase KdpC subunit (Myxococcus xanthus (strain DK1622)).